A 476-amino-acid polypeptide reads, in one-letter code: Transcription factor EB (476 aa).

Disordered regions lie at residues Met-1 to Pro-66 and His-107 to Ser-142. Positions Met-1 to Leu-167 are interaction with ACSS2. Over residues Gln-26 to Gln-44 the composition is skewed to low complexity. A phosphoserine mark is found at Ser-109, Ser-114, Ser-122, and Ser-138. Positions Ser-132–Ser-142 are enriched in low complexity. A Nuclear export signal motif is present at residues Gly-136–Pro-153. At Ser-142 the chain carries Phosphoserine; by MTOR. The strong transcription activation domain stretch occupies residues Glu-156–Met-165. Thr-183 carries the phosphothreonine modification. Ser-211 is modified (phosphoserine; by MTOR). Cys-212 carries the S-(2,3-dicarboxypropyl)cysteine modification. The region spanning Gln-235–Met-288 is the bHLH domain. The short motif at Arg-245–Arg-248 is the Nuclear localization signal element. A leucine-zipper region spans residues Leu-298–Leu-319. Position 332 is a phosphoserine (Ser-332). The segment at Glu-349–Lys-430 is disordered. Residues Pro-369–Pro-390 are compositionally biased toward pro residues. Residues Ser-423, Ser-441, Ser-466, Ser-467, and Ser-469 each carry the phosphoserine modification. Low complexity predominate over residues Ser-447–Ser-469. Positions Ser-447 to Leu-476 are disordered.

This sequence belongs to the MiT/TFE family. As to quaternary structure, homodimer and heterodimer; with TFE3 or MITF. Interacts (when phosphorylated by MTOR) with YWHAZ; promoting retention in the cytosol. Interacts with IRGM; promoting association between TFEB and PPP3CB and dephosphorylation. Interacts with small GTPases Rag (RagA/RRAGA, RagB/RRAGB, RagC/RRAGC and/or RagD/RRAGD); promoting its recruitment to lysosomal membrane in the presence of nutrients. Interacts with ACSS2. Phosphorylation at Ser-211 by MTOR via non-canonical mTORC1 pathway regulates its subcellular location and activity. When nutrients are present, phosphorylation by MTOR promotes association with 14-3-3/YWHA adapters and retention in the cytosol. Inhibition of mTORC1, starvation and lysosomal disruption, promotes dephosphorylation by calcineurin PPP3CB and translocation to the nucleus. Dephosphorylated by calcineurin PPP3CB in response to lysosomal Ca(2+) release. IRGM promotes dephosphorylation by calcineurin PPP3CB, resulting in TFEB nuclear translocation and stimulation of lysosomal biogenesis. Dephosphorylated by phosphatase PPP3CA following Coxsackievirus B3 infection, leading to nuclear translocation. Exported from the nucleus in a mTORC1-dependent manner in response to nutrient availability. In terms of processing, alkylated via a non-enzymatic covalent modification. Itaconate, an anti-inflammatory metabolite generated in response to lipopolysaccharide, alkylates Cys-212, preventing association with 14-3-3/YWHA adapters, thereby promoting nuclear translocation and activity. Post-translationally, sumoylated; does not affect dimerization with MITF. (Microbial infection) Cleavage by Coxsackievirus B3 protease 3C after site Gln-60. This non-phosphorylated cleavage product retains its ability to interact with TFEB, TFE3 or MITF and presents impaired transcriptional activity, resulting in disruption of lysosomal functions and increased viral infection.

It localises to the nucleus. The protein localises to the cytoplasm. Its subcellular location is the cytosol. It is found in the lysosome membrane. Its activity is regulated as follows. Inhibited by eltrombopag drug, which binds to the bHLH domain and disrupts DNA-binding. Transcription factor that acts as a master regulator of lysosomal biogenesis, autophagy, lysosomal exocytosis, lipid catabolism, energy metabolism and immune response. Specifically recognizes and binds E-box sequences (5'-CANNTG-3'); efficient DNA-binding requires dimerization with itself or with another MiT/TFE family member such as TFE3 or MITF. Involved in the cellular response to amino acid availability by acting downstream of MTOR: in the presence of nutrients, TFEB phosphorylation by MTOR promotes its cytosolic retention and subsequent inactivation. Upon starvation or lysosomal stress, inhibition of MTOR induces TFEB dephosphorylation, resulting in nuclear localization and transcription factor activity. Specifically recognizes and binds the CLEAR-box sequence (5'-GTCACGTGAC-3') present in the regulatory region of many lysosomal genes, leading to activate their expression, thereby playing a central role in expression of lysosomal genes. Regulates lysosomal positioning in response to nutrient deprivation by promoting the expression of PIP4P1. Acts as a positive regulator of autophagy by promoting expression of genes involved in autophagy. In association with TFE3, activates the expression of CD40L in T-cells, thereby playing a role in T-cell-dependent antibody responses in activated CD4(+) T-cells and thymus-dependent humoral immunity. Specifically recognizes the gamma-E3 box, a subset of E-boxes, present in the heavy-chain immunoglobulin enhancer. Plays a role in the signal transduction processes required for normal vascularization of the placenta. Involved in the immune response to infection by the bacteria S.aureus, S.typhimurium or S.enterica: infection promotes itaconate production, leading to alkylation, resulting in nuclear localization and transcription factor activity. Itaconate-mediated alkylation activates TFEB-dependent lysosomal biogenesis, facilitating the bacteria clearance during the antibacterial innate immune response. In association with ACSS2, promotes the expression of genes involved in lysosome biogenesis and both autophagy upon glucose deprivation. The protein is Transcription factor EB of Homo sapiens (Human).